The following is a 358-amino-acid chain: tRNA N6-adenosine threonylcarbamoyltransferase (358 aa).

Fe cation is bound by residues His-118 and His-122. Residues 143-147 (IVSGG), Asp-176, Gly-189, and Asn-298 each bind substrate. Asp-326 contributes to the Fe cation binding site.

Belongs to the KAE1 / TsaD family. It depends on Fe(2+) as a cofactor.

Its subcellular location is the cytoplasm. The catalysed reaction is L-threonylcarbamoyladenylate + adenosine(37) in tRNA = N(6)-L-threonylcarbamoyladenosine(37) in tRNA + AMP + H(+). Functionally, required for the formation of a threonylcarbamoyl group on adenosine at position 37 (t(6)A37) in tRNAs that read codons beginning with adenine. Is involved in the transfer of the threonylcarbamoyl moiety of threonylcarbamoyl-AMP (TC-AMP) to the N6 group of A37, together with TsaE and TsaB. TsaD likely plays a direct catalytic role in this reaction. The protein is tRNA N6-adenosine threonylcarbamoyltransferase of Rhodopirellula baltica (strain DSM 10527 / NCIMB 13988 / SH1).